The following is a 536-amino-acid chain: Lysosomal acid glucosylceramidase (536 aa).

The signal sequence occupies residues 1 to 39 (MEFSSPSREECPKPSGRVSIMAGSLTGLLLLQAVSWASG). 2 disulfide bridges follow: Cys43/Cys55 and Cys57/Cys62. N-linked (GlcNAc...) asparagine glycosylation is found at Asn58, Asn98, and Asn185. The active-site Proton donor is Glu274. Asn309 carries an N-linked (GlcNAc...) asparagine glycan. Glu379 (nucleophile) is an active-site residue. Residue Asn501 is glycosylated (N-linked (GlcNAc...) asparagine).

Belongs to the glycosyl hydrolase 30 family. Interacts with saposin-C. Interacts with SCARB2. Interacts with TCP1. Interacts with GRN; this interaction prevents aggregation of GBA1-SCARB2 complex via interaction with HSPA1A upon stress.

Its subcellular location is the lysosome membrane. It carries out the reaction a beta-D-glucosyl-(1&lt;-&gt;1')-N-acylsphing-4-enine + H2O = an N-acylsphing-4-enine + D-glucose. The catalysed reaction is a beta-D-galactosyl-(1&lt;-&gt;1')-N-acylsphing-4-enine + H2O = an N-acylsphing-4-enine + D-galactose. The enzyme catalyses cholesteryl 3-beta-D-glucoside + H2O = cholesterol + D-glucose. It catalyses the reaction a beta-D-glucosyl-(1&lt;-&gt;1')-N-acylsphing-4-enine + cholesterol = cholesteryl 3-beta-D-glucoside + an N-acylsphing-4-enine. It carries out the reaction beta-D-glucosyl-N-(9Z-octadecenoyl)-sphing-4E-enine + cholesterol = N-(9Z-octadecenoyl)-sphing-4-enine + cholesteryl 3-beta-D-glucoside. The catalysed reaction is beta-D-glucosyl-N-octanoylsphing-4E-enine + cholesterol = N-octanoylsphing-4-enine + cholesteryl 3-beta-D-glucoside. The enzyme catalyses beta-D-glucosyl-N-dodecanoylsphing-4-enine + cholesterol = N-dodecanoylsphing-4-enine + cholesteryl 3-beta-D-glucoside. It catalyses the reaction beta-D-glucosyl-(1&lt;-&gt;1)-N-octadecanoylsphing-4-enine + cholesterol = N-octadecanoylsphing-4-enine + cholesteryl 3-beta-D-glucoside. It carries out the reaction beta-D-glucosyl-(1&lt;-&gt;1')-N-(15Z-tetracosenoyl)-sphing-4-enine + cholesterol = N-(15Z-tetracosenoyl)-sphing-4-enine + cholesteryl 3-beta-D-glucoside. The catalysed reaction is a beta-D-galactosyl-(1&lt;-&gt;1')-N-acylsphing-4-enine + cholesterol = cholesteryl 3-beta-D-galactoside + an N-acylsphing-4-enine. The enzyme catalyses 1-(beta-D-galactosyl)-N-dodecanoylsphing-4-enine + cholesterol = cholesteryl 3-beta-D-galactoside + N-dodecanoylsphing-4-enine. It catalyses the reaction a beta-D-xylosyl-(1&lt;-&gt;1')-N-acylsphing-4-enine + cholesterol = cholesteryl 3-beta-D-xyloside + an N-acylsphing-4-enine. It carries out the reaction beta-D-xylosyl-(1&lt;-&gt;1')-N-(9Z-octadecenoyl)-sphing-4-enine + cholesterol = cholesteryl 3-beta-D-xyloside + N-(9Z-octadecenoyl)-sphing-4-enine. It participates in steroid metabolism; cholesterol metabolism. Its pathway is sphingolipid metabolism. Its function is as follows. Glucosylceramidase that catalyzes, within the lysosomal compartment, the hydrolysis of glucosylceramides/GlcCers (such as beta-D-glucosyl-(1&lt;-&gt;1')-N-acylsphing-4-enine) into free ceramides (such as N-acylsphing-4-enine) and glucose. Plays a central role in the degradation of complex lipids and the turnover of cellular membranes. Through the production of ceramides, participates in the PKC-activated salvage pathway of ceramide formation. Catalyzes the glucosylation of cholesterol, through a transglucosylation reaction where glucose is transferred from GlcCer to cholesterol. GlcCer containing mono-unsaturated fatty acids (such as beta-D-glucosyl-N-(9Z-octadecenoyl)-sphing-4-enine) are preferred as glucose donors for cholesterol glucosylation when compared with GlcCer containing same chain length of saturated fatty acids (such as beta-D-glucosyl-N-octadecanoyl-sphing-4-enine). Under specific conditions, may alternatively catalyze the reverse reaction, transferring glucose from cholesteryl 3-beta-D-glucoside to ceramide. Can also hydrolyze cholesteryl 3-beta-D-glucoside producing glucose and cholesterol. Catalyzes the hydrolysis of galactosylceramides/GalCers (such as beta-D-galactosyl-(1&lt;-&gt;1')-N-acylsphing-4-enine), as well as the transfer of galactose between GalCers and cholesterol in vitro, but with lower activity than with GlcCers. Contrary to GlcCer and GalCer, xylosylceramide/XylCer (such as beta-D-xyosyl-(1&lt;-&gt;1')-N-acylsphing-4-enine) is not a good substrate for hydrolysis, however it is a good xylose donor for transxylosylation activity to form cholesteryl 3-beta-D-xyloside. This is Lysosomal acid glucosylceramidase (GBA1) from Pan troglodytes (Chimpanzee).